The primary structure comprises 214 residues: Adenylate kinase (214 aa).

Residue 10-15 (GTGKGT) coordinates ATP. Residues 30–59 (STGDILRENIQKKNTIGKKIHNILKNGELV) form an NMP region. AMP-binding positions include Thr31, Arg36, 57-59 (ELV), 85-88 (GFPR), and Gln92. The interval 122 to 159 (GRRVHTPSGRIYNINYNPPREEGKDDLTQEKLTIREDD) is LID. ATP is bound by residues Arg123 and 132-133 (IY). AMP-binding residues include Arg156 and Arg167. Residue Gln200 coordinates ATP.

This sequence belongs to the adenylate kinase family. Monomer.

Its subcellular location is the cytoplasm. The enzyme catalyses AMP + ATP = 2 ADP. It participates in purine metabolism; AMP biosynthesis via salvage pathway; AMP from ADP: step 1/1. Its function is as follows. Catalyzes the reversible transfer of the terminal phosphate group between ATP and AMP. Plays an important role in cellular energy homeostasis and in adenine nucleotide metabolism. In Buchnera aphidicola subsp. Schizaphis graminum (strain Sg), this protein is Adenylate kinase.